The following is a 221-amino-acid chain: Immediate early response gene 2 protein (221 aa).

Met1 is modified (N-acetylmethionine). Residues 54–156 form a disordered region; sequence THQPEFPPSR…EGEATSEVSN (103 aa). Residues 64-77 are compositionally biased toward basic and acidic residues; that stretch reads RALDPRLHPPREPE. Over residues 125–136 the composition is skewed to low complexity; the sequence is SDLSDGSDAGLV.

Belongs to the IER family.

Its subcellular location is the cytoplasm. It is found in the nucleus. DNA-binding protein that seems to act as a transcription factor. Involved in the regulation of neuronal differentiation, acts upon JNK-signaling pathway activation and plays a role in neurite outgrowth in hippocampal cells. May mediate with FIBP FGF-signaling in the establishment of laterality in the embryo. Promotes cell motility, seems to stimulate tumor metastasis. In Rattus norvegicus (Rat), this protein is Immediate early response gene 2 protein (Ier2).